The primary structure comprises 196 residues: Pyridoxal 5'-phosphate synthase subunit PdxT (196 aa).

46–48 (GES) is an L-glutamine binding site. Cys-78 (nucleophile) is an active-site residue. Residues Arg-105 and 133 to 134 (IR) each bind L-glutamine. Catalysis depends on charge relay system residues His-169 and Glu-171.

This sequence belongs to the glutaminase PdxT/SNO family. As to quaternary structure, in the presence of PdxS, forms a dodecamer of heterodimers. Only shows activity in the heterodimer.

The catalysed reaction is aldehydo-D-ribose 5-phosphate + D-glyceraldehyde 3-phosphate + L-glutamine = pyridoxal 5'-phosphate + L-glutamate + phosphate + 3 H2O + H(+). It catalyses the reaction L-glutamine + H2O = L-glutamate + NH4(+). It functions in the pathway cofactor biosynthesis; pyridoxal 5'-phosphate biosynthesis. Its function is as follows. Catalyzes the hydrolysis of glutamine to glutamate and ammonia as part of the biosynthesis of pyridoxal 5'-phosphate. The resulting ammonia molecule is channeled to the active site of PdxS. The sequence is that of Pyridoxal 5'-phosphate synthase subunit PdxT from Geobacillus kaustophilus (strain HTA426).